Consider the following 522-residue polypeptide: GMP synthase [glutamine-hydrolyzing] (522 aa).

In terms of domain architecture, Glutamine amidotransferase type-1 spans 9 to 204 (KILILDFGAQ…VVDICGCQML (196 aa)). C86 serves as the catalytic Nucleophile. Residues H178 and E180 contribute to the active site. A GMPS ATP-PPase domain is found at 205-397 (WTAANIIEDQ…LGLPHAMVYR (193 aa)). 232-238 (SGGVDSS) serves as a coordination point for ATP.

As to quaternary structure, homodimer.

The enzyme catalyses XMP + L-glutamine + ATP + H2O = GMP + L-glutamate + AMP + diphosphate + 2 H(+). It participates in purine metabolism; GMP biosynthesis; GMP from XMP (L-Gln route): step 1/1. In terms of biological role, catalyzes the synthesis of GMP from XMP. In Xylella fastidiosa (strain 9a5c), this protein is GMP synthase [glutamine-hydrolyzing] (guaA).